A 342-amino-acid polypeptide reads, in one-letter code: uncharacterized protein (342 aa).

The Zn(2+) site is built by Cys-41, His-63, Cys-94, Cys-97, Cys-100, Cys-108, and Glu-149.

Belongs to the zinc-containing alcohol dehydrogenase family. Requires Zn(2+) as cofactor.

This is an uncharacterized protein from Haemophilus influenzae (strain ATCC 51907 / DSM 11121 / KW20 / Rd).